A 261-amino-acid chain; its full sequence is Hydroxyethylthiazole kinase (261 aa).

M39 contacts substrate. The ATP site is built by R115 and T159. Position 186 (G186) interacts with substrate.

Belongs to the Thz kinase family. The cofactor is Mg(2+).

The enzyme catalyses 5-(2-hydroxyethyl)-4-methylthiazole + ATP = 4-methyl-5-(2-phosphooxyethyl)-thiazole + ADP + H(+). It functions in the pathway cofactor biosynthesis; thiamine diphosphate biosynthesis; 4-methyl-5-(2-phosphoethyl)-thiazole from 5-(2-hydroxyethyl)-4-methylthiazole: step 1/1. Functionally, catalyzes the phosphorylation of the hydroxyl group of 4-methyl-5-beta-hydroxyethylthiazole (THZ). In Macrococcus caseolyticus (strain JCSC5402) (Macrococcoides caseolyticum), this protein is Hydroxyethylthiazole kinase.